A 134-amino-acid chain; its full sequence is Replication enhancer protein (134 aa).

This sequence belongs to the geminiviridae replication enhancer protein family. In terms of assembly, homooligomer. Interacts with the replication-associated protein (REP). Interacts with host proliferating cell nuclear antigen (PCNA). Interacts with host retinoblastoma-related protein 1 (RBR1), and may thereby deregulate the host cell cycle. Oligomerization and interaction with PCNA are necessary for optimal replication enhancement.

Its function is as follows. Increases viral DNA accumulation. Enhances infectivity and symptom expression. In Mungbean yellow mosaic virus (strain Vigna) (MYMV), this protein is Replication enhancer protein.